Reading from the N-terminus, the 275-residue chain is NH(3)-dependent NAD(+) synthetase (275 aa).

50-57 (GISGGVDS) provides a ligand contact to ATP. Mg(2+) is bound at residue Asp56. Position 147 (Arg147) interacts with deamido-NAD(+). Residue Thr167 coordinates ATP. Position 172 (Glu172) interacts with Mg(2+). Positions 180 and 187 each coordinate deamido-NAD(+). Lys196 and Thr218 together coordinate ATP. 267–268 (HK) contributes to the deamido-NAD(+) binding site.

It belongs to the NAD synthetase family. Homodimer.

The catalysed reaction is deamido-NAD(+) + NH4(+) + ATP = AMP + diphosphate + NAD(+) + H(+). It functions in the pathway cofactor biosynthesis; NAD(+) biosynthesis; NAD(+) from deamido-NAD(+) (ammonia route): step 1/1. Functionally, catalyzes the ATP-dependent amidation of deamido-NAD to form NAD. Uses ammonia as a nitrogen source. The chain is NH(3)-dependent NAD(+) synthetase from Pseudomonas syringae pv. syringae (strain B728a).